The primary structure comprises 463 residues: Bifunctional protein HldE (463 aa).

A ribokinase region spans residues Met1–Thr311. Residue Asn191–Glu194 participates in ATP binding. Residue Asp260 is part of the active site. A cytidylyltransferase region spans residues Phe334–Asp463.

It in the N-terminal section; belongs to the carbohydrate kinase PfkB family. In the C-terminal section; belongs to the cytidylyltransferase family. Homodimer.

It catalyses the reaction D-glycero-beta-D-manno-heptose 7-phosphate + ATP = D-glycero-beta-D-manno-heptose 1,7-bisphosphate + ADP + H(+). The enzyme catalyses D-glycero-beta-D-manno-heptose 1-phosphate + ATP + H(+) = ADP-D-glycero-beta-D-manno-heptose + diphosphate. Its pathway is nucleotide-sugar biosynthesis; ADP-L-glycero-beta-D-manno-heptose biosynthesis; ADP-L-glycero-beta-D-manno-heptose from D-glycero-beta-D-manno-heptose 7-phosphate: step 1/4. It participates in nucleotide-sugar biosynthesis; ADP-L-glycero-beta-D-manno-heptose biosynthesis; ADP-L-glycero-beta-D-manno-heptose from D-glycero-beta-D-manno-heptose 7-phosphate: step 3/4. Functionally, catalyzes the phosphorylation of D-glycero-D-manno-heptose 7-phosphate at the C-1 position to selectively form D-glycero-beta-D-manno-heptose-1,7-bisphosphate. In terms of biological role, catalyzes the ADP transfer from ATP to D-glycero-beta-D-manno-heptose 1-phosphate, yielding ADP-D-glycero-beta-D-manno-heptose. This chain is Bifunctional protein HldE, found in Helicobacter pylori (strain Shi470).